Here is a 226-residue protein sequence, read N- to C-terminus: TPD1 protein homolog 1A (226 aa).

Positions 1–35 (MRVSSASSTPPPPAFAAAAWAVVLLAMLRSDVALA) are cleaved as a signal peptide.

As to quaternary structure, interacts with MSP1. In terms of tissue distribution, expressed in roots, and anthers and ovules during meiosis.

In terms of biological role, involved in cell specification during anther development. Required for the differentiation of primary parietal cells into secondary parietal cells in anthers. May serve as an extracellular ligand for the MSP1 receptor kinase to limit sporocyte number in ovules. This Oryza sativa subsp. japonica (Rice) protein is TPD1 protein homolog 1A.